The sequence spans 394 residues: Elongation factor Tu (394 aa).

Residues 10–204 (KLHINVGTIG…VLDSYIPEPK (195 aa)) form the tr-type G domain. The tract at residues 19 to 26 (GHVDHGKT) is G1. 19–26 (GHVDHGKT) lines the GTP pocket. Residue T26 participates in Mg(2+) binding. A G2 region spans residues 60–64 (GITIN). The segment at 81-84 (DCPG) is G3. GTP is bound by residues 81–85 (DCPGH) and 136–139 (NKCD). The tract at residues 136-139 (NKCD) is G4. The G5 stretch occupies residues 174-176 (SAL).

The protein belongs to the TRAFAC class translation factor GTPase superfamily. Classic translation factor GTPase family. EF-Tu/EF-1A subfamily. Monomer.

Its subcellular location is the cytoplasm. It catalyses the reaction GTP + H2O = GDP + phosphate + H(+). In terms of biological role, GTP hydrolase that promotes the GTP-dependent binding of aminoacyl-tRNA to the A-site of ribosomes during protein biosynthesis. This chain is Elongation factor Tu, found in Baumannia cicadellinicola subsp. Homalodisca coagulata.